The sequence spans 804 residues: G-type lectin S-receptor-like serine/threonine-protein kinase At1g61500 (804 aa).

A signal peptide spans 1 to 24 (MMTRFACLHLFTMFLFTLLSGSSS). Positions 25 to 145 (AVITTESPLS…VSERALWQSF (121 aa)) constitute a Bulb-type lectin domain. Residues 25–427 (AVITTESPLS…ELDGNKRKKT (403 aa)) are Extracellular-facing. Residues N54, N135, and N237 are each glycosylated (N-linked (GlcNAc...) asparagine). One can recognise an EGF-like; atypical domain in the interval 279 to 315 (PKKLCDFYGACGPFGLCVMSPSPMCKCFRGFVPKSVE). 2 disulfides stabilise this stretch: C283/C295 and C289/C303. N-linked (GlcNAc...) asparagine glycans are attached at residues N321, N337, and N376. Positions 334–416 (CLGNSTGEDA…GELLSIRLAR (83 aa)) constitute a PAN domain. Cystine bridges form between C369/C390 and C373/C379. Residues 428-448 (IVASIVSLTLFMILGFTAFGV) traverse the membrane as a helical segment. At 449–804 (WRCRVEHIAH…GMTQSVILGR (356 aa)) the chain is on the cytoplasmic side. Positions 491–776 (FSLSNKLGQG…DLPSPKQPTF (286 aa)) constitute a Protein kinase domain. Residues 497-505 (LGQGGFGSV) and K519 contribute to the ATP site. 2 positions are modified to phosphoserine: S525 and S540. Residues 580 to 597 (RKRLEIDWPKRFDIIQGI) form a caM-binding region. D616 functions as the Proton acceptor in the catalytic mechanism. S620 and S633 each carry phosphoserine. Position 650 is a phosphothreonine (T650). S693 and S787 each carry phosphoserine.

The protein belongs to the protein kinase superfamily. Ser/Thr protein kinase family.

It localises to the cell membrane. The enzyme catalyses L-seryl-[protein] + ATP = O-phospho-L-seryl-[protein] + ADP + H(+). It carries out the reaction L-threonyl-[protein] + ATP = O-phospho-L-threonyl-[protein] + ADP + H(+). In Arabidopsis thaliana (Mouse-ear cress), this protein is G-type lectin S-receptor-like serine/threonine-protein kinase At1g61500.